Reading from the N-terminus, the 340-residue chain is Porphobilinogen deaminase (340 aa).

At cysteine 258 the chain carries S-(dipyrrolylmethanemethyl)cysteine.

The protein belongs to the HMBS family. Dipyrromethane serves as cofactor.

It catalyses the reaction 4 porphobilinogen + H2O = hydroxymethylbilane + 4 NH4(+). It participates in porphyrin-containing compound metabolism; protoporphyrin-IX biosynthesis; coproporphyrinogen-III from 5-aminolevulinate: step 2/4. Functionally, tetrapolymerization of the monopyrrole PBG into the hydroxymethylbilane pre-uroporphyrinogen in several discrete steps. In Candida albicans (strain SC5314 / ATCC MYA-2876) (Yeast), this protein is Porphobilinogen deaminase (HEM3).